A 129-amino-acid chain; its full sequence is Intraflagellar transport protein 20 homolog (129 aa).

Residues Val89 to Glu121 adopt a coiled-coil conformation.

As to quaternary structure, component of the IFT complex B composed of at least che-2, che-13, dyf-1, dyf-3, dyf-6, dyf-11, dyf-13, ift-20, ift-74, ift-81, ifta-2, osm-1, osm-5 and osm-6.

It is found in the cell projection. The protein resides in the cilium. In terms of biological role, component of the intraflagellar transport (IFT) complex B required for transport of proteins in the motile cilium. Required for ciliary entrance and transport of specific ciliary cargo proteins such as che-3 which are related to motility. This chain is Intraflagellar transport protein 20 homolog, found in Caenorhabditis elegans.